The following is a 228-amino-acid chain: 2-C-methyl-D-erythritol 4-phosphate cytidylyltransferase (228 aa).

The protein belongs to the IspD/TarI cytidylyltransferase family. IspD subfamily.

It catalyses the reaction 2-C-methyl-D-erythritol 4-phosphate + CTP + H(+) = 4-CDP-2-C-methyl-D-erythritol + diphosphate. It participates in isoprenoid biosynthesis; isopentenyl diphosphate biosynthesis via DXP pathway; isopentenyl diphosphate from 1-deoxy-D-xylulose 5-phosphate: step 2/6. Functionally, catalyzes the formation of 4-diphosphocytidyl-2-C-methyl-D-erythritol from CTP and 2-C-methyl-D-erythritol 4-phosphate (MEP). The sequence is that of 2-C-methyl-D-erythritol 4-phosphate cytidylyltransferase from Halalkalibacterium halodurans (strain ATCC BAA-125 / DSM 18197 / FERM 7344 / JCM 9153 / C-125) (Bacillus halodurans).